The chain runs to 192 residues: Putative inactive ribonuclease 11 (192 aa).

The signal sequence occupies residues M1–A15. The interval R21 to N54 is disordered. Residues E43–N54 are compositionally biased toward polar residues. N47 and N104 each carry an N-linked (GlcNAc...) asparagine glycan.

This sequence belongs to the pancreatic ribonuclease family.

Its subcellular location is the secreted. The sequence is that of Putative inactive ribonuclease 11 (Rnase11) from Mus musculus (Mouse).